Here is a 345-residue protein sequence, read N- to C-terminus: Glycosyltransferase 1 domain-containing protein 1 (345 aa).

A signal peptide spans 1 to 19 (MKILFLACLRAHTGNSTTA). N-linked (GlcNAc...) asparagine glycosylation is found at asparagine 246 and asparagine 322.

It belongs to the glycosyltransferase group 1 family. Glycosyltransferase 4 subfamily.

Its subcellular location is the secreted. The sequence is that of Glycosyltransferase 1 domain-containing protein 1 (glt1d1) from Xenopus tropicalis (Western clawed frog).